A 64-amino-acid polypeptide reads, in one-letter code: uncharacterized protein (64 aa).

This is an uncharacterized protein from Escherichia phage lambda (Bacteriophage lambda).